We begin with the raw amino-acid sequence, 349 residues long: MHILVTGAAGFIGSHTVLELLNSGYTVLCIDNFANAISVTDEHGNAISLKRVAQLTGKDVPFQNVDVCDEAALEKVFSENKFDGIIHLAALKAVGESVAKPLQYYSNNLVASLNLIQMCLKYNVKNFVFSSSATVYGPPSELPITEKSQTGQGITNPYGQTKYMMEQILIDVGKANPEWNVVLLRYFNPVGAHKSGLIGEDPKGVPNNLMPYVSQVAIGKLPVLTIYGDQFDTVDGTGVRDYIHVVDLAKGHVKAFDRIKTVGNIGTEIYNLGTGVGYSVRQMVDALKKVSGRDIPVKIGVPRPGDVASVYCDPSLAQEKLGWRAETGLEEMCADLWNWQTKNPQGFSA.

Residues 10 to 12, 31 to 35, 66 to 67, and lysine 92 each bind NAD(+); these read GFI, DNFAN, and DV. 132–134 contacts substrate; sequence SAT. Tyrosine 158 acts as the Proton acceptor in catalysis. Lysine 162 and tyrosine 186 together coordinate NAD(+). Substrate is bound by residues 186–188, 207–209, 225–227, arginine 240, and 303–306; these read YFN, NNL, TIY, and RPGD.

It belongs to the NAD(P)-dependent epimerase/dehydratase family. NAD(+) serves as cofactor. In terms of tissue distribution, expressed in gonads, vulva, intestine, hypdermis and nervous system.

The catalysed reaction is UDP-alpha-D-glucose = UDP-alpha-D-galactose. It catalyses the reaction UDP-N-acetyl-alpha-D-glucosamine = UDP-N-acetyl-alpha-D-galactosamine. The protein operates within carbohydrate metabolism; galactose metabolism. Its function is as follows. Catalyzes two distinct but analogous reactions: the reversible epimerization of UDP-glucose to UDP-galactose and the reversible epimerization of UDP-N-acetylglucosamine to UDP-N-acetylgalactosamine. The reaction with UDP-Gal plays a critical role in the Leloir pathway of galactose catabolism in which galactose is converted to the glycolytic intermediate glucose 6-phosphate. It contributes to the catabolism of dietary galactose and enables the endogenous biosynthesis of both UDP-Gal and UDP-GalNAc when exogenous sources are limited. Both UDP-sugar interconversions are important for the synthesis of glycoproteins and glycolipids. In Caenorhabditis elegans, this protein is UDP-glucose 4-epimerase.